Reading from the N-terminus, the 499-residue chain is Endosomal/lysosomal proton channel TMEM175 (499 aa).

The span at 1–10 (MSRLQVQEQA) shows a compositional bias: polar residues. The tract at residues 1 to 26 (MSRLQVQEQAVDSEGDSSLYRRDEEG) is disordered. Topologically, residues 1 to 30 (MSRLQVQEQAVDSEGDSSLYRRDEEGTQSS) are cytoplasmic. Residues 31 to 53 (HRMLGFSDALLSIIATVMILPVT) traverse the membrane as a helical segment. Residues 32–38 (RMLGFSD) carry the RxxxFSD motif 1 motif. Residues 54–74 (HTEISPEQQFDKSIQKLLATR) lie on the Lumenal side of the membrane. The interval 55–60 (TEISPE) is short helix H1-1. The tract at residues 62 to 68 (QFDKSIQ) is short helix H2-1. Residues 75-97 (IAVYLMTFLIVTVAWAAHTRLFQ) traverse the membrane as a helical segment. Residues 98 to 103 (VVGKID) lie on the Cytoplasmic side of the membrane. A helical membrane pass occupies residues 104–125 (DTLALLNLACMMTITLLPYTFS). Topologically, residues 126–135 (LMVTFPDVPL) are lumenal. Residues 136-157 (GIFLFCMCVIAIGSVQAMIVGY) form a helical membrane-spanning segment. The Cytoplasmic portion of the chain corresponds to 158 to 181 (AFHFPHLLNPQIQCSTHRALSRRH). Residues 182 to 202 (ILHLVLRGPALCFVAAVFSLF) traverse the membrane as a helical segment. Over 203-207 (FFPLS) the chain is Lumenal. A helical membrane pass occupies residues 208 to 227 (YLLMVTVIFLPHISKATTWC). Residues 228–254 (KDKFMGHRESPAHNVEPFSIDLHAPLS) lie on the Cytoplasmic side of the membrane. The helical transmembrane segment at 255–279 (KERVEAFSDGVYAIVATLLILDICE) threads the bilayer. Positions 257-263 (RVEAFSD) match the RxxxFSD motif 2 motif. The Lumenal segment spans residues 280–306 (DNVPDPKDVQQKFSGSLVAALGAYGPQ). Residues 285–293 (PKDVQQKFS) are short helix H1-2. Positions 295 to 301 (SLVAALG) are short helix H2-2. Residues 307-329 (FLAYFGSFATVGLLWFAHHSLFL) traverse the membrane as a helical segment. The Cytoplasmic portion of the chain corresponds to 330-335 (HVRKAT). A helical transmembrane segment spans residues 336 to 357 (QTMGLFNILSLAFVGGLPLAYQ). At 358–372 (QTSAFARQPRDELER) the chain is on the lumenal side. Residues 373 to 393 (VRVSCAIIFFASIFQFAIWTT) traverse the membrane as a helical segment. Topologically, residues 394-413 (ALLHQRETLQPAVQFGGQEH) are cytoplasmic. Residues 414 to 437 (AFMFAKLALYPCASLLAFAATCLL) traverse the membrane as a helical segment. Residues 438–439 (SR) are Lumenal-facing. The helical transmembrane segment at 440–466 (FSTAIFHLMQIAVPFAFLLLRLLVRLA) threads the bilayer. Residues 467–499 (LAGLQVLWDLWPERPQQDQGEPETQSQLLPASC) lie on the Cytoplasmic side of the membrane.

This sequence belongs to the TMEM175 family. Homodimer. Interacts with AKT (AKT1, AKT2 or AKT3); leading to formation of the lysoK(GF) complex, which activates the channel. Interacts with LAMP1; inhibiting the proton channel activity of TMEM175. Interacts with LAMP2; inhibiting the proton channel activity of TMEM175.

Its subcellular location is the endosome membrane. It is found in the lysosome membrane. It catalyses the reaction H(+)(in) = H(+)(out). It carries out the reaction K(+)(in) = K(+)(out). Active at low pH (under pH 4.6): proton channel activity is activated by luminal side protons. Polyunsaturated fatty acids, such as arachidonic acid, also activate the channel activity. Proton channel activity is directly inhibited by LAMP1 or LAMP2, facilitating lysosomal acidification. Channel activity is activated following interaction with AKT (AKT1, AKT2 or AKT3): interaction promotes activation from closed to an open state. Activation by AKT is independent of AKT serine/threonine-protein kinase activity. Its function is as follows. Proton-activated proton channel that catalyzes proton efflux from endosomes and lysosomes to maintain a steady-state pH. Activated at low pH (under pH 4.6) by luminal side protons: selectively mediates lysosomal proton release from lysosomes, eliciting a proton leak that balances V-ATPase activity to maintain pH homeostasis. Regulation of lumenal pH stability is required for autophagosome-lysosome fusion. Also acts as a potassium channel at higher pH, regulating potassium conductance in endosomes and lysosomes. Constitutes the pore-forming subunit of the lysoK(GF) complex, a complex activated by extracellular growth factors. The lysoK(GF) complex is composed of TMEM175 and AKT (AKT1, AKT2 or AKT3), a major target of growth factor receptors: in the complex, TMEM175 channel is opened by conformational changes by AKT, leading to its activation. The lysoK(GF) complex is required to protect neurons against stress-induced damage. This is Endosomal/lysosomal proton channel TMEM175 from Rattus norvegicus (Rat).